The following is a 444-amino-acid chain: Biotin carboxylase 2 (444 aa).

Residues 1 to 444 form the Biotin carboxylation domain; the sequence is MFTKVLIANR…VTTDFLKQHL (444 aa). Residues Lys-116, Lys-158, 164–165, 200–203, His-208, and His-235 each bind ATP; these read GG and EKVI. The ATP-grasp domain maps to 120–317; sequence RKAMEAAGVP…LVEQQLRIAA (198 aa). Residue Lys-237 coordinates hydrogencarbonate. ATP-binding residues include Glu-275 and Glu-288. Positions 275, 288, and 290 each coordinate Mg(2+). Positions 275, 288, and 290 each coordinate Mn(2+). Positions 292, 295, and 338 each coordinate hydrogencarbonate. Arg-292 is a catalytic residue. Residue Arg-338 coordinates biotin.

Acetyl-CoA carboxylase is a heterohexamer of biotin carboxyl carrier protein, biotin carboxylase and the two subunits of carboxyl transferase in a 2:2 complex. It depends on Mg(2+) as a cofactor. Requires Mn(2+) as cofactor.

The enzyme catalyses N(6)-biotinyl-L-lysyl-[protein] + hydrogencarbonate + ATP = N(6)-carboxybiotinyl-L-lysyl-[protein] + ADP + phosphate + H(+). Its pathway is lipid metabolism; malonyl-CoA biosynthesis; malonyl-CoA from acetyl-CoA: step 1/1. Functionally, this protein is a component of the acetyl coenzyme A carboxylase complex; first, biotin carboxylase catalyzes the carboxylation of the carrier protein and then the transcarboxylase transfers the carboxyl group to form malonyl-CoA. The protein is Biotin carboxylase 2 (accC2) of Bacillus subtilis (strain 168).